The sequence spans 281 residues: NADPH-dependent 7-cyano-7-deazaguanine reductase (281 aa).

Residue 87–89 (IES) coordinates substrate. 89–90 (SK) contacts NADPH. The active-site Thioimide intermediate is C188. D195 acts as the Proton donor in catalysis. 227-228 (HE) serves as a coordination point for substrate. 256–257 (RG) contacts NADPH. The interval 261–281 (INPYRSTEQAKPDHNHRMARQ) is disordered. A compositionally biased stretch (basic and acidic residues) spans 268 to 281 (EQAKPDHNHRMARQ).

This sequence belongs to the GTP cyclohydrolase I family. QueF type 2 subfamily. Homodimer.

It localises to the cytoplasm. The enzyme catalyses 7-aminomethyl-7-carbaguanine + 2 NADP(+) = 7-cyano-7-deazaguanine + 2 NADPH + 3 H(+). It participates in tRNA modification; tRNA-queuosine biosynthesis. In terms of biological role, catalyzes the NADPH-dependent reduction of 7-cyano-7-deazaguanine (preQ0) to 7-aminomethyl-7-deazaguanine (preQ1). The sequence is that of NADPH-dependent 7-cyano-7-deazaguanine reductase from Vibrio vulnificus (strain YJ016).